We begin with the raw amino-acid sequence, 67 residues long: Conotoxin AbVIO (67 aa).

Positions 1-17 (VIIIAVLFLTACQLIAT) are cleaved as a signal peptide. A propeptide spanning residues 18 to 40 (ASYARSERKHPDLRLSSRNSKLS) is cleaved from the precursor. 3 cysteine pairs are disulfide-bonded: Cys-43–Cys-57, Cys-50–Cys-61, and Cys-56–Cys-66.

Belongs to the conotoxin O1 superfamily. Expressed by the venom duct.

It localises to the secreted. This Conus abbreviatus (Abbreviated cone) protein is Conotoxin AbVIO.